A 52-amino-acid polypeptide reads, in one-letter code: Large ribosomal subunit protein bL33 (52 aa).

Belongs to the bacterial ribosomal protein bL33 family.

The chain is Large ribosomal subunit protein bL33 from Campylobacter jejuni subsp. jejuni serotype O:6 (strain 81116 / NCTC 11828).